Consider the following 187-residue polypeptide: ATP synthase subunit delta, chloroplastic (187 aa).

This sequence belongs to the ATPase delta chain family. In terms of assembly, F-type ATPases have 2 components, F(1) - the catalytic core - and F(0) - the membrane proton channel. F(1) has five subunits: alpha(3), beta(3), gamma(1), delta(1), epsilon(1). CF(0) has four main subunits: a(1), b(1), b'(1) and c(10-14). The alpha and beta chains form an alternating ring which encloses part of the gamma chain. F(1) is attached to F(0) by a central stalk formed by the gamma and epsilon chains, while a peripheral stalk is formed by the delta, b and b' chains.

The protein resides in the plastid. The protein localises to the chloroplast thylakoid membrane. Functionally, f(1)F(0) ATP synthase produces ATP from ADP in the presence of a proton or sodium gradient. F-type ATPases consist of two structural domains, F(1) containing the extramembraneous catalytic core and F(0) containing the membrane proton channel, linked together by a central stalk and a peripheral stalk. During catalysis, ATP synthesis in the catalytic domain of F(1) is coupled via a rotary mechanism of the central stalk subunits to proton translocation. This protein is part of the stalk that links CF(0) to CF(1). It either transmits conformational changes from CF(0) to CF(1) or is implicated in proton conduction. The chain is ATP synthase subunit delta, chloroplastic from Thalassiosira pseudonana (Marine diatom).